We begin with the raw amino-acid sequence, 163 residues long: NADH-quinone oxidoreductase subunit I (163 aa).

4Fe-4S ferredoxin-type domains lie at 53–83 (LRRY…IEAG) and 94–123 (VRYD…EGPN). Residues cysteine 63, cysteine 66, cysteine 69, cysteine 73, cysteine 103, cysteine 106, cysteine 109, and cysteine 113 each coordinate [4Fe-4S] cluster.

It belongs to the complex I 23 kDa subunit family. In terms of assembly, NDH-1 is composed of 14 different subunits. Subunits NuoA, H, J, K, L, M, N constitute the membrane sector of the complex. Requires [4Fe-4S] cluster as cofactor.

Its subcellular location is the cell inner membrane. It carries out the reaction a quinone + NADH + 5 H(+)(in) = a quinol + NAD(+) + 4 H(+)(out). In terms of biological role, NDH-1 shuttles electrons from NADH, via FMN and iron-sulfur (Fe-S) centers, to quinones in the respiratory chain. The immediate electron acceptor for the enzyme in this species is believed to be ubiquinone. Couples the redox reaction to proton translocation (for every two electrons transferred, four hydrogen ions are translocated across the cytoplasmic membrane), and thus conserves the redox energy in a proton gradient. The sequence is that of NADH-quinone oxidoreductase subunit I from Brucella abortus (strain S19).